The sequence spans 200 residues: Holliday junction branch migration complex subunit RuvA (200 aa).

The tract at residues 1 to 64 is domain I; that stretch reads MYAYFRGELI…EDLMQLYGFI (64 aa). The segment at 65–143 is domain II; that stretch reads EEEERQLFLL…KLQQTRPGKT (79 aa). Residues 144-154 form a flexible linker region; it reads AGAGSVASLSE. Residues 154–200 form a domain III region; it reads EDALQALMTLGFSRASAQQAVTRALLSAENPGVEDIVREALQNIRNH.

This sequence belongs to the RuvA family. In terms of assembly, homotetramer. Forms an RuvA(8)-RuvB(12)-Holliday junction (HJ) complex. HJ DNA is sandwiched between 2 RuvA tetramers; dsDNA enters through RuvA and exits via RuvB. An RuvB hexamer assembles on each DNA strand where it exits the tetramer. Each RuvB hexamer is contacted by two RuvA subunits (via domain III) on 2 adjacent RuvB subunits; this complex drives branch migration. In the full resolvosome a probable DNA-RuvA(4)-RuvB(12)-RuvC(2) complex forms which resolves the HJ.

The protein resides in the cytoplasm. In terms of biological role, the RuvA-RuvB-RuvC complex processes Holliday junction (HJ) DNA during genetic recombination and DNA repair, while the RuvA-RuvB complex plays an important role in the rescue of blocked DNA replication forks via replication fork reversal (RFR). RuvA specifically binds to HJ cruciform DNA, conferring on it an open structure. The RuvB hexamer acts as an ATP-dependent pump, pulling dsDNA into and through the RuvAB complex. HJ branch migration allows RuvC to scan DNA until it finds its consensus sequence, where it cleaves and resolves the cruciform DNA. The protein is Holliday junction branch migration complex subunit RuvA of Prosthecochloris aestuarii (strain DSM 271 / SK 413).